The primary structure comprises 634 residues: MNDNIARKMQQTYNIAYWGGSYYYVNDLGNVSVCPNPDLPGAKIDLAELVKRVQQEQKHLRLPALFCFPQILQHRLRSINAAFKRARESYGYKGDYFLVYPIKVNQQRRVIESLASSGEPLGLEAGSKAELMAVLAHAGMTRTVIVCNGYKDREYIRLALIGEKLGHKVYLVIEKMSEIAQVLEEAERLNVIPRLGVRARLASQGSGKWQASGGEKSKFGLAATQVLQLVETLRAVDRLDSLQLLHFHLGSQLANIRDIATGVRESARFYVELHKLGVNIQCFDVGGGLGVDYEGTRSQSDCSVNYGLNEYANNVIWGIGDACDEHGLPHPTVITESGRALTAHHTVLVSNVIGVERNEFTQTTPPAEDASRPLTSLWETWQEMHSEGNRRSLRESLHDGQLDLHDVHTQYAHGMLDLTERAWAEELYLNICRRIQQDLDPSNRAHRPIIDELQERMADKFYVNFSLFQSLPDAWGIDQLFPVLPIEGLDKPLDRRAVLLDITCDSDGIVDHYVDGDGVAATMPMPAYDPDCPPMIGFFMVGAYQEILGNMHNLFGDTAAIDVYVFDNGEVTYNQSEEGDSVADMLQYVKLDPNVLMARFRDQVKGADLDTGLQEQFLLEFESGLYGYTYLEDE.

N6-(pyridoxal phosphate)lysine is present on Lys-103. Residue 283 to 293 (FDVGGGLGVDY) participates in substrate binding.

It belongs to the Orn/Lys/Arg decarboxylase class-II family. SpeA subfamily. It depends on Mg(2+) as a cofactor. The cofactor is pyridoxal 5'-phosphate.

It catalyses the reaction L-arginine + H(+) = agmatine + CO2. It participates in amine and polyamine biosynthesis; agmatine biosynthesis; agmatine from L-arginine: step 1/1. Functionally, catalyzes the biosynthesis of agmatine from arginine. The polypeptide is Biosynthetic arginine decarboxylase (Photorhabdus laumondii subsp. laumondii (strain DSM 15139 / CIP 105565 / TT01) (Photorhabdus luminescens subsp. laumondii)).